The sequence spans 312 residues: Ornithine carbamoyltransferase (312 aa).

Residues 50–53, Gln77, Arg101, and 128–131 contribute to the carbamoyl phosphate site; these read STRT and HPCQ. L-ornithine contacts are provided by residues Asn160, Asp224, and 228 to 229; that span reads SM. Carbamoyl phosphate contacts are provided by residues 264 to 265 and Arg292; that span reads CL.

The protein belongs to the aspartate/ornithine carbamoyltransferase superfamily. OTCase family.

It localises to the cytoplasm. The catalysed reaction is carbamoyl phosphate + L-ornithine = L-citrulline + phosphate + H(+). It participates in amino-acid biosynthesis; L-arginine biosynthesis; L-arginine from L-ornithine and carbamoyl phosphate: step 1/3. In terms of biological role, reversibly catalyzes the transfer of the carbamoyl group from carbamoyl phosphate (CP) to the N(epsilon) atom of ornithine (ORN) to produce L-citrulline. This is Ornithine carbamoyltransferase from Leifsonia xyli subsp. xyli (strain CTCB07).